The sequence spans 223 residues: Sigma non-opioid intracellular receptor 1 (223 aa).

The Lumenal segment spans residues 1–9 (MQWAVGRRW). The segment at 2–8 (QWAVGRR) is targeting to endoplasmic reticulum-associated lipid droplets. A helical membrane pass occupies residues 10–30 (LWVALFLAAVAVLTQIVWLWL). At 31 to 223 (GTQNFVFQRE…LTTYLFGQDP (193 aa)) the chain is on the cytoplasmic side. The interval 99 to 106 (SLSEYVLL) is important for ligand-binding. Positions 177–223 (VIPSTLGFALADTVFSTQDFLTLFYTLRVYARALQLELTTYLFGQDP) are C-terminal hydrophobic region.

This sequence belongs to the ERG2 family. In terms of assembly, homotrimer. Forms a ternary complex with ANK2 and ITPR3. The complex is disrupted by agonists. Interacts with KCNA4. Interacts with KCNA2; cocaine consumption leads to increased interaction. Interacts with RNF112 in an oxidative stress-regulated manner. Ubiquitously expressed with higher expression in liver, kidney and steroid-producing tissues such as placenta, ovary and adrenal gland.

It is found in the nucleus inner membrane. It localises to the nucleus outer membrane. The protein localises to the nucleus envelope. The protein resides in the cytoplasmic vesicle. Its subcellular location is the endoplasmic reticulum membrane. It is found in the membrane. It localises to the lipid droplet. The protein localises to the cell junction. The protein resides in the cell membrane. Its subcellular location is the cell projection. It is found in the growth cone. It localises to the postsynaptic density membrane. Functions in lipid transport from the endoplasmic reticulum and is involved in a wide array of cellular functions probably through regulation of the biogenesis of lipid microdomains at the plasma membrane. Involved in the regulation of different receptors it plays a role in BDNF signaling and EGF signaling. Also regulates ion channels like the potassium channel and could modulate neurotransmitter release. Plays a role in calcium signaling through modulation together with ANK2 of the ITP3R-dependent calcium efflux at the endoplasmic reticulum. Plays a role in several other cell functions including proliferation, survival and death. Originally identified for its ability to bind various psychoactive drugs it is involved in learning processes, memory and mood alteration. Necessary for proper mitochondrial axonal transport in motor neurons, in particular the retrograde movement of mitochondria. Plays a role in protecting cells against oxidative stress-induced cell death via its interaction with RNF112. In Cavia porcellus (Guinea pig), this protein is Sigma non-opioid intracellular receptor 1 (SIGMAR1).